Consider the following 365-residue polypeptide: Chorismate synthase (365 aa).

2 residues coordinate NADP(+): Arg-48 and Arg-54. FMN is bound by residues 125–127 (RSS), 238–239 (NA), Gly-278, 293–297 (KPTSS), and Arg-319.

The protein belongs to the chorismate synthase family. Homotetramer. FMNH2 serves as cofactor.

It carries out the reaction 5-O-(1-carboxyvinyl)-3-phosphoshikimate = chorismate + phosphate. It functions in the pathway metabolic intermediate biosynthesis; chorismate biosynthesis; chorismate from D-erythrose 4-phosphate and phosphoenolpyruvate: step 7/7. Catalyzes the anti-1,4-elimination of the C-3 phosphate and the C-6 proR hydrogen from 5-enolpyruvylshikimate-3-phosphate (EPSP) to yield chorismate, which is the branch point compound that serves as the starting substrate for the three terminal pathways of aromatic amino acid biosynthesis. This reaction introduces a second double bond into the aromatic ring system. This is Chorismate synthase from Vesicomyosocius okutanii subsp. Calyptogena okutanii (strain HA).